A 378-amino-acid polypeptide reads, in one-letter code: Cell surface mannoprotein MP65 (378 aa).

The first 32 residues, Met-1–Arg-32, serve as a signal peptide directing secretion. The interval Val-67 to Gly-124 is disordered. The segment covering Asn-72–Pro-93 has biased composition (polar residues). Residues Ser-94 to Glu-116 are compositionally biased toward low complexity. The active-site Nucleophile is Glu-316.

Belongs to the glycosyl hydrolase 17 family. In terms of assembly, component of a multiprotein complex of 250 kDa composed of at least HYR1, MP65, and PRA1. Post-translationally, glycosylated protein with a polysaccharide moiety composed exclusively of mannose and glucose at a ratio of 12.7 to 1. Contributes highly to the carbohydrate component of the matrix. Treatment with tunicamycin impairs glycosylation.

The protein localises to the secreted. The protein resides in the cell wall. Functionally, surface mannoprotein required for hyphal morphogenesis, surface adherence, and pathogenicity. Contributes in a high proportion to the carbohydrate component of the matrix due to high levels of glycosylation and may play important roles during biofilm development and maintenance. Acts as a major antigen target of host cell-mediated immune response. Induces extensive T-cell proliferation of human peripheral blood mononuclear cells. Facilitates host dendritic cells maturation and promotes cytokine production through its glycosylated portion while its protein core is essentially involved in induction of T-cell response. This Candida albicans (strain SC5314 / ATCC MYA-2876) (Yeast) protein is Cell surface mannoprotein MP65 (MP65).